We begin with the raw amino-acid sequence, 722 residues long: BTB/POZ domain-containing protein 9 (722 aa).

Residues 46 to 112 form the BTB domain; the sequence is ADVEFIVEEE…IYSGTLLLST (67 aa). Residues 151–247 enclose the BACK domain; it reads CMILDAARLY…MNLEHLLQVV (97 aa). Positions 565–593 form a coiled coil; it reads QDKNYLKKIADMEKEREKREKEKKTAKTD. The span at 577–594 shows a compositional bias: basic and acidic residues; that stretch reads EKEREKREKEKKTAKTDD. Disordered regions lie at residues 577–626 and 640–722; these read EKER…VLRS and PLTP…RETL. The span at 597 to 606 shows a compositional bias: polar residues; it reads IASTSGSSLA. Residues 607–626 are compositionally biased toward low complexity; that stretch reads SGHAESPSTSSSSSQSVLRS. The span at 641–658 shows a compositional bias: pro residues; it reads LTPPALSPPGTPALPAPL. Residues 670-679 show a composition bias toward polar residues; it reads EQNQPSNISA. The span at 686–704 shows a compositional bias: low complexity; that stretch reads SPSSRSNPSPSLSRSRSQS.

Detected in the brain (at protein level).

The protein localises to the cytoplasm. Its function is as follows. Essential for the homeostatic regulation of sleep and motor activity, by depressing hyperactivity and wakefulness. May function, at least in part, by ensuring dopamine biosynthesis. The chain is BTB/POZ domain-containing protein 9 from Drosophila melanogaster (Fruit fly).